Here is a 464-residue protein sequence, read N- to C-terminus: Secretion-regulating guanine nucleotide exchange factor (464 aa).

7 RCC1 repeats span residues 14-66 (AAAL…VVTD), 68-118 (GSLF…ILTE), 119-170 (NGQV…AATA), 172-229 (GTVF…SLTD), 230-282 (AGEL…AQTV), 283-349 (TGKV…LAVI), and 350-401 (GGVC…ALCQ). Residues 301–313 (VETREGWESEKQD) are compositionally biased toward basic and acidic residues. Positions 301–323 (VETREGWESEKQDPSLPGSGPQK) are disordered. Residues 411 to 464 (HPSVTSPSPDATKEARSQEAMEQERNQKERHAETSPQAQSDRFRNGGLVAETLE) form a disordered region. The segment covering 421-443 (ATKEARSQEAMEQERNQKERHAE) has biased composition (basic and acidic residues). Serine 427 is subject to Phosphoserine.

In terms of assembly, interacts with SEC5. The interaction occurs only in the presence of magnesium or manganese and is stimulated by dCTP or GTP.

It localises to the cytoplasm. The protein resides in the nucleus. Its function is as follows. Probable guanine nucleotide exchange factor (GEF), which may be involved in the secretion process. The polypeptide is Secretion-regulating guanine nucleotide exchange factor (SERGEF) (Bos taurus (Bovine)).